The following is a 416-amino-acid chain: Glutamyl-tRNA reductase (416 aa).

Residues 49-52 (TCNR), S105, 110-112 (EPQ), and Q116 contribute to the substrate site. C50 serves as the catalytic Nucleophile. Residue 185–190 (GAGEMI) coordinates NADP(+).

Belongs to the glutamyl-tRNA reductase family. As to quaternary structure, homodimer.

It carries out the reaction (S)-4-amino-5-oxopentanoate + tRNA(Glu) + NADP(+) = L-glutamyl-tRNA(Glu) + NADPH + H(+). Its pathway is porphyrin-containing compound metabolism; protoporphyrin-IX biosynthesis; 5-aminolevulinate from L-glutamyl-tRNA(Glu): step 1/2. Catalyzes the NADPH-dependent reduction of glutamyl-tRNA(Glu) to glutamate 1-semialdehyde (GSA). This is Glutamyl-tRNA reductase from Nitrosomonas europaea (strain ATCC 19718 / CIP 103999 / KCTC 2705 / NBRC 14298).